The primary structure comprises 361 residues: Ribosomal RNA large subunit methyltransferase M (361 aa).

Residues Ser-187, 220–223, Asp-239, Asp-259, and Asp-276 contribute to the S-adenosyl-L-methionine site; that span reads CPGG. Lys-305 (proton acceptor) is an active-site residue.

It belongs to the class I-like SAM-binding methyltransferase superfamily. RNA methyltransferase RlmE family. RlmM subfamily. As to quaternary structure, monomer.

It is found in the cytoplasm. The catalysed reaction is cytidine(2498) in 23S rRNA + S-adenosyl-L-methionine = 2'-O-methylcytidine(2498) in 23S rRNA + S-adenosyl-L-homocysteine + H(+). Functionally, catalyzes the 2'-O-methylation at nucleotide C2498 in 23S rRNA. This is Ribosomal RNA large subunit methyltransferase M from Shewanella sp. (strain W3-18-1).